Here is a 265-residue protein sequence, read N- to C-terminus: Type III pantothenate kinase (265 aa).

9-16 (DAGNSRIK) contributes to the ATP binding site. Residues Tyr96 and 103–106 (GSDR) each bind substrate. Asp105 serves as the catalytic Proton acceptor. Thr129 contributes to the ATP binding site. Thr189 serves as a coordination point for substrate.

This sequence belongs to the type III pantothenate kinase family. Homodimer. Requires NH4(+) as cofactor. The cofactor is K(+).

It is found in the cytoplasm. The enzyme catalyses (R)-pantothenate + ATP = (R)-4'-phosphopantothenate + ADP + H(+). It functions in the pathway cofactor biosynthesis; coenzyme A biosynthesis; CoA from (R)-pantothenate: step 1/5. Catalyzes the phosphorylation of pantothenate (Pan), the first step in CoA biosynthesis. This Burkholderia orbicola (strain AU 1054) protein is Type III pantothenate kinase.